We begin with the raw amino-acid sequence, 375 residues long: Growth/differentiation factor 8 (375 aa).

The first 18 residues, 1–18 (MQKLQIFVYIYLFVLIVA), serve as a signal peptide directing secretion. Positions 19-266 (GPVDLNENSE…VTDTPKRSRR (248 aa)) are excised as a propeptide. N-linked (GlcNAc...) asparagine glycans are attached at residues Asn-48 and Asn-71. 4 disulfide bridges follow: Cys-272–Cys-282, Cys-281–Cys-340, Cys-309–Cys-372, and Cys-313–Cys-374.

It belongs to the TGF-beta family. As to quaternary structure, homodimer; disulfide-linked. Interacts with WFIKKN2, leading to inhibit its activity. Interacts with FSTL3. Synthesized as large precursor molecule that undergoes proteolytic cleavage to generate an N-terminal propeptide and a disulfide linked C-terminal dimer, which is the biologically active molecule. The circulating form consists of a latent complex of the C-terminal dimer and other proteins, including its propeptide, which maintain the C-terminal dimer in a latent, inactive state. Ligand activation requires additional cleavage of the prodomain by a tolloid-like metalloproteinase.

The protein resides in the secreted. Its function is as follows. Acts specifically as a negative regulator of skeletal muscle growth. This Aepyceros melampus (Impala) protein is Growth/differentiation factor 8 (MSTN).